Reading from the N-terminus, the 203-residue chain is Guanylate kinase (203 aa).

The Guanylate kinase-like domain maps to 3–181; sequence GSLFIVAAPS…AHTDLRAIVQ (179 aa). 10-17 contributes to the ATP binding site; that stretch reads APSGAGKT.

The protein belongs to the guanylate kinase family.

The protein localises to the cytoplasm. The enzyme catalyses GMP + ATP = GDP + ADP. Essential for recycling GMP and indirectly, cGMP. The sequence is that of Guanylate kinase from Nitrosococcus oceani (strain ATCC 19707 / BCRC 17464 / JCM 30415 / NCIMB 11848 / C-107).